A 502-amino-acid polypeptide reads, in one-letter code: MFS-type transporeter aprT (502 aa).

The interval 1–38 (MASPELASHHSDPSDGEGAPFLPGVDDESPESLNSDIP) is disordered. The next 11 helical transmembrane spans lie at 45–65 (HGLI…GPMI), 114–136 (IGYR…GLLA), 150–170 (VGFV…NIFP), 175–195 (WFGA…ALFW), 214–234 (FGIA…FVMK), 239–259 (VPLM…NLLP), 302–322 (VAVI…AFLV), 336–356 (ATLL…FILP), 380–400 (VMLL…NTLI), 403–423 (LLLH…ITGL), and 464–484 (LWIG…ALVL). An N-linked (GlcNAc...) asparagine glycan is attached at Asn-495.

Belongs to the major facilitator superfamily.

It is found in the cell membrane. Functionally, MFS-rype transporer; part of the gene cluster that mediates the biosynthesis of the asperipin-2a, a bicyclic peptide that possesses two macrocyclic ether rings consisting of 14- and 17-membered paracyclophans. AprT is likely to be involved in the cellular export of asperipin-2a. The chain is MFS-type transporeter aprT from Aspergillus flavus (strain ATCC 200026 / FGSC A1120 / IAM 13836 / NRRL 3357 / JCM 12722 / SRRC 167).